The primary structure comprises 703 residues: Subtilisin-like protease SBT4.7 (703 aa).

An N-terminal signal peptide occupies residues 1 to 19 (MAKRDYFCFVVLFLSSVSA). The propeptide at 20 to 107 (VIDDPQNKQV…VFPNINYKLQ (88 aa)) is activation peptide. One can recognise an Inhibitor I9 domain in the interval 29-106 (VYVVYMGSLP…SVFPNINYKL (78 aa)). In terms of domain architecture, Peptidase S8 spans 111–556 (SWDFLGLKEG…AGHVDQIAAI (446 aa)). The Charge relay system role is filled by Asp139. The N-linked (GlcNAc...) asparagine glycan is linked to Asn170. The active-site Charge relay system is His194. Residues Asn217, Asn360, Asn416, and Asn433 are each glycosylated (N-linked (GlcNAc...) asparagine). The region spanning 350–411 (KYPLVYGDNF…LLPPDDFDSL (62 aa)) is the PA domain. Ser495 serves as the catalytic Charge relay system. N-linked (GlcNAc...) asparagine glycosylation is found at Asn577, Asn615, and Asn633.

This sequence belongs to the peptidase S8 family. In terms of processing, the C-terminal propeptide is autocleaved.

The protein resides in the secreted. This chain is Subtilisin-like protease SBT4.7, found in Arabidopsis thaliana (Mouse-ear cress).